A 390-amino-acid chain; its full sequence is MRYITAGESHGPQLTVILEGVPAGLTLAAEHINKELLRRQKGHGRGRRMQIEMDTVEIVSGVRHGMTLGSPITLIVKNDDFKHWTKVMGAEPISEKESKEMKRTITKPRPGHADLNGAIKYGHRDIRNVLERSSARETTVRVAAGAVAKQILKELGVEIAGHVLEIGGVKAKHISNLSIEEIQIITENSPVRCLDKTVEQEMMDAIDNAKSSGDSIGGIVEVIAEGMPIGVGSYVHYDRKLDAKLAGAIMSINAFKGAEIGVGFEAARQPGSKVHDEILWDEEQGYTRKTNNAGGLEGGMTTGMPIVVRGVMKPIPTLYKPLASVDIDTKEAFQASIERSDSCAVPAAGVVAESVVAWELAHALVEQFGKDRMELIQQNITQHNKYAKEF.

NADP(+)-binding residues include R39 and R45. FMN-binding positions include R132–S134, N253–A254, G298, K313–T317, and R339.

This sequence belongs to the chorismate synthase family. Homotetramer. FMNH2 serves as cofactor.

It carries out the reaction 5-O-(1-carboxyvinyl)-3-phosphoshikimate = chorismate + phosphate. It functions in the pathway metabolic intermediate biosynthesis; chorismate biosynthesis; chorismate from D-erythrose 4-phosphate and phosphoenolpyruvate: step 7/7. In terms of biological role, catalyzes the anti-1,4-elimination of the C-3 phosphate and the C-6 proR hydrogen from 5-enolpyruvylshikimate-3-phosphate (EPSP) to yield chorismate, which is the branch point compound that serves as the starting substrate for the three terminal pathways of aromatic amino acid biosynthesis. This reaction introduces a second double bond into the aromatic ring system. The chain is Chorismate synthase 1 from Bacillus anthracis.